Reading from the N-terminus, the 408-residue chain is LL-diaminopimelate aminotransferase (408 aa).

Residues Tyr15 and Gly42 each contribute to the substrate site. Residues Tyr72, 108–109 (SK), Tyr132, Asn187, Tyr218, and 246–248 (SFS) contribute to the pyridoxal 5'-phosphate site. Positions 109, 132, and 187 each coordinate substrate. Lys249 carries the post-translational modification N6-(pyridoxal phosphate)lysine. 2 residues coordinate pyridoxal 5'-phosphate: Arg257 and Asn292. Substrate is bound by residues Asn292 and Arg388.

The protein belongs to the class-I pyridoxal-phosphate-dependent aminotransferase family. LL-diaminopimelate aminotransferase subfamily. As to quaternary structure, homodimer. Pyridoxal 5'-phosphate serves as cofactor.

It carries out the reaction (2S,6S)-2,6-diaminopimelate + 2-oxoglutarate = (S)-2,3,4,5-tetrahydrodipicolinate + L-glutamate + H2O + H(+). Its pathway is amino-acid biosynthesis; L-lysine biosynthesis via DAP pathway; LL-2,6-diaminopimelate from (S)-tetrahydrodipicolinate (aminotransferase route): step 1/1. Its function is as follows. Involved in the synthesis of meso-diaminopimelate (m-DAP or DL-DAP), required for both lysine and peptidoglycan biosynthesis. Catalyzes the direct conversion of tetrahydrodipicolinate to LL-diaminopimelate. In Synechococcus sp. (strain RCC307), this protein is LL-diaminopimelate aminotransferase.